Consider the following 97-residue polypeptide: Protein RnfH (97 aa).

This sequence belongs to the UPF0125 (RnfH) family.

The protein is Protein RnfH of Paramagnetospirillum magneticum (strain ATCC 700264 / AMB-1) (Magnetospirillum magneticum).